Consider the following 483-residue polypeptide: Cobyric acid synthase (483 aa).

Residues 251–438 (ALIVAVPMLP…LHGVFSADRF (188 aa)) form the GATase cobBQ-type domain. Catalysis depends on C333, which acts as the Nucleophile. H430 is an active-site residue.

Belongs to the CobB/CobQ family. CobQ subfamily.

Its pathway is cofactor biosynthesis; adenosylcobalamin biosynthesis. Its function is as follows. Catalyzes amidations at positions B, D, E, and G on adenosylcobyrinic A,C-diamide. NH(2) groups are provided by glutamine, and one molecule of ATP is hydrogenolyzed for each amidation. This chain is Cobyric acid synthase, found in Brucella suis biovar 1 (strain 1330).